Reading from the N-terminus, the 137-residue chain is Large ribosomal subunit protein uL16 (137 aa).

The protein belongs to the universal ribosomal protein uL16 family. As to quaternary structure, part of the 50S ribosomal subunit.

Binds 23S rRNA and is also seen to make contacts with the A and possibly P site tRNAs. The polypeptide is Large ribosomal subunit protein uL16 (Alcanivorax borkumensis (strain ATCC 700651 / DSM 11573 / NCIMB 13689 / SK2)).